The primary structure comprises 1372 residues: Putative Polyprotein CP (1372 aa).

2 coiled-coil regions span residues 126 to 153 (NKEN…LKNI) and 299 to 350 (EKQK…EELD). The disordered stretch occupies residues 372–398 (SESSEINEISDNETEQISGSDSDYNNE). The segment covering 386-398 (EQISGSDSDYNNE) has biased composition (polar residues). The CCHC-type zinc-finger motif lies at 739-756 (CKCYNCGEEGHISPNCKK). A coiled-coil region spans residues 1162–1189 (DDRTNIQREKDQIEKADHNLELQKELNN).

The protein localises to the virion. The polypeptide is Putative Polyprotein CP (Cassava vein mosaic virus (CsVMV)).